Reading from the N-terminus, the 730-residue chain is Sodium-dependent neutral amino acid transporter B(0)AT2 (730 aa).

The disordered stretch occupies residues 1–24 (MPKNSKVVKRELDDDVTESVKDLL). The Extracellular segment spans residues 1-70 (MPKNSKVVKR…RPAWSSKLQY (70 aa)). Phosphoserine occurs at positions 25 and 55. 3 helical membrane passes run 71-91 (ILAQ…PYLC), 97-117 (GAYL…LFFL), and 149-169 (VVCY…LFYF). Topologically, residues 170–223 (SQSFQQPLPWDQCPLVKNASHTFVEPECEQSSATTYYWYREALNISSSISESGG) are cytoplasmic. Transmembrane regions (helical) follow at residues 224–244 (LNWK…LAMI) and 253–273 (IIYF…IRAL). An N-linked (GlcNAc...) asparagine glycan is attached at N276. The next 2 helical transmembrane spans lie at 302 to 322 (AATQ…AFSS) and 335 to 355 (VLVS…VFAV). Over 356–458 (LGFKANVINE…AMTHFPASPF (103 aa)) the chain is Cytoplasmic. A run of 5 helical transmembrane segments spans residues 459–479 (WSVM…FGTI), 494–514 (KEIL…IFVQ), 530–550 (TLPL…VYGI), 575–595 (YVSP…MGLS), and 619–639 (LVVC…VFIV). Residues 640-730 (RRFNLIDDSS…IMPDMPESDL (91 aa)) are Extracellular-facing. Phosphoserine is present on residues S687, S699, and S701.

Belongs to the sodium:neurotransmitter symporter (SNF) (TC 2.A.22) family. SLC6A15 subfamily.

The protein resides in the membrane. The enzyme catalyses L-leucine(in) + Na(+)(in) = L-leucine(out) + Na(+)(out). It carries out the reaction L-isoleucine(in) + Na(+)(in) = L-isoleucine(out) + Na(+)(out). It catalyses the reaction L-methionine(in) + Na(+)(in) = L-methionine(out) + Na(+)(out). The catalysed reaction is L-proline(in) + Na(+)(in) = L-proline(out) + Na(+)(out). The enzyme catalyses L-alanine(in) + Na(+)(in) = L-alanine(out) + Na(+)(out). It carries out the reaction L-asparagine(in) + Na(+)(in) = L-asparagine(out) + Na(+)(out). It catalyses the reaction L-valine(in) + Na(+)(in) = L-valine(out) + Na(+)(out). The catalysed reaction is L-cysteine(in) + Na(+)(in) = L-cysteine(out) + Na(+)(out). The enzyme catalyses L-glutamine(in) + Na(+)(in) = L-glutamine(out) + Na(+)(out). It carries out the reaction L-serine(in) + Na(+)(in) = L-serine(out) + Na(+)(out). It catalyses the reaction L-threonine(in) + Na(+)(in) = L-threonine(out) + Na(+)(out). The catalysed reaction is L-pipecolate(in) + Na(+)(in) = L-pipecolate(out) + Na(+)(out). The enzyme catalyses L-phenylalanine(in) + Na(+)(in) = L-phenylalanine(out) + Na(+)(out). In terms of biological role, functions as a sodium-dependent neutral amino acid transporter. Exhibits preference for the branched-chain amino acids, particularly leucine, valine and isoleucine and methionine. Can also transport low-affinity substrates such as alanine, phenylalanine, glutamine and pipecolic acid. Mediates the saturable, pH-sensitive and electrogenic cotransport of proline and sodium ions with a stoichiometry of 1:1. May have a role as transporter for neurotransmitter precursors into neurons. In contrast to other members of the neurotransmitter transporter family, does not appear to be chloride-dependent. In Pongo abelii (Sumatran orangutan), this protein is Sodium-dependent neutral amino acid transporter B(0)AT2 (SLC6A15).